We begin with the raw amino-acid sequence, 359 residues long: Phosphate acyltransferase (359 aa).

The interval 338-359 (LEGAAGRAARPPPPRRASSHDA) is disordered.

The protein belongs to the PlsX family. Homodimer. Probably interacts with PlsY.

The protein localises to the cytoplasm. It carries out the reaction a fatty acyl-[ACP] + phosphate = an acyl phosphate + holo-[ACP]. It participates in lipid metabolism; phospholipid metabolism. In terms of biological role, catalyzes the reversible formation of acyl-phosphate (acyl-PO(4)) from acyl-[acyl-carrier-protein] (acyl-ACP). This enzyme utilizes acyl-ACP as fatty acyl donor, but not acyl-CoA. This chain is Phosphate acyltransferase, found in Anaeromyxobacter sp. (strain Fw109-5).